The chain runs to 276 residues: Large ribosomal subunit protein uL2c (276 aa).

The segment at 225-276 (AMNPVDHPHGGGEGRTPIGRKKPVTPWGYSALGKKSRKRNRYSDASILRRRE) is disordered.

The protein belongs to the universal ribosomal protein uL2 family. As to quaternary structure, part of the 50S ribosomal subunit.

It is found in the plastid. The protein resides in the chloroplast. The chain is Large ribosomal subunit protein uL2c (rpl2) from Pinus koraiensis (Korean pine).